An 87-amino-acid polypeptide reads, in one-letter code: DLQNVNITLRILFRPVASQLPRIYTSIGEDYDERFDAGELITQRQVSDDLTEREFTEAVEAKQVAQQEAERARKLEAAEDIAYQLSR.

Thr-8 carries the post-translational modification Phosphothreonine. Lys-62 carries the N6-acetyllysine modification. Tyr-83 carries the phosphotyrosine modification.

The protein belongs to the prohibitin family. As to quaternary structure, the mitochondrial prohibitin complex consists of two subunits (PHB1 and PHB2), assembled into a membrane-associated ring-shaped supercomplex of approximately 1 mDa. Interacts with STOML2. Interacts with MAP1LC3B (membrane-bound form LC3-II); the interaction requires PHB2 and takes place upon Parkin-mediated mitochondrial damage. Interacts with STAT3 (unphosphorylated or phosphorylated at 'Ser-727'). Interacts with CLPB. Interacts with CD86 (via cytoplasmic domain); the interactions increases after priming with CD40.

It is found in the mitochondrion inner membrane. It localises to the nucleus. Its subcellular location is the cytoplasm. The protein resides in the cell membrane. Functionally, protein with pleiotropic attributes mediated in a cell-compartment- and tissue-specific manner, which include the plasma membrane-associated cell signaling functions, mitochondrial chaperone, and transcriptional co-regulator of transcription factors in the nucleus. Plays a role in adipose tissue and glucose homeostasis in a sex-specific manner. Contributes to pulmonary vascular remodeling by accelerating proliferation of pulmonary arterial smooth muscle cells. Its function is as follows. In the mitochondria, together with PHB2, forms large ring complexes (prohibitin complexes) in the inner mitochondrial membrane (IMM) and functions as a chaperone protein that stabilizes mitochondrial respiratory enzymes and maintains mitochondrial integrity in the IMM, which is required for mitochondrial morphogenesis, neuronal survival, and normal lifespan. The prohibitin complex, with DNAJC19, regulates cardiolipin remodeling and the protein turnover of OMA1 in a cardiolipin-binding manner. Regulates mitochondrial respiration activity playing a role in cellular aging. The prohibitin complex plays a role of mitophagy receptor involved in targeting mitochondria for autophagic degradation. Involved in mitochondrial-mediated antiviral innate immunity, activates RIG-I-mediated signal transduction and production of IFNB1 and proinflammatory cytokine IL6. In terms of biological role, in the nucleus, acts as a transcription coregulator, enhances promoter binding by TP53, a transcription factor it activates, but reduces the promoter binding by E2F1, a transcription factor it represses. Interacts with STAT3 to affect IL17 secretion in T-helper Th17 cells. In the plasma membrane, cooperates with CD86 to mediate CD86-signaling in B lymphocytes that regulates the level of IgG1 produced through the activation of distal signaling intermediates. Upon CD40 engagement, required to activate NF-kappa-B signaling pathway via phospholipase C and protein kinase C activation. The sequence is that of Prohibitin 1 (PHB1) from Mesocricetus auratus (Golden hamster).